We begin with the raw amino-acid sequence, 447 residues long: Protein king tubby (447 aa).

The disordered stretch occupies residues G54–S84. Low complexity predominate over residues I62–S84. Phosphoserine is present on S136. Low complexity predominate over residues E168 to S182. Residues E168 to S191 are disordered.

The protein belongs to the TUB family.

It is found in the cytoplasm. The protein localises to the nucleus. It localises to the cell projection. The protein resides in the cilium membrane. Its subcellular location is the rhabdomere. The chain is Protein king tubby from Drosophila grimshawi (Hawaiian fruit fly).